A 167-amino-acid polypeptide reads, in one-letter code: SsrA-binding protein (167 aa).

Residues 144-167 (HDKRAADKEKQSKKEVRSAMAKYQ) are disordered. The span at 146–160 (KRAADKEKQSKKEVR) shows a compositional bias: basic and acidic residues.

Belongs to the SmpB family.

It is found in the cytoplasm. Functionally, required for rescue of stalled ribosomes mediated by trans-translation. Binds to transfer-messenger RNA (tmRNA), required for stable association of tmRNA with ribosomes. tmRNA and SmpB together mimic tRNA shape, replacing the anticodon stem-loop with SmpB. tmRNA is encoded by the ssrA gene; the 2 termini fold to resemble tRNA(Ala) and it encodes a 'tag peptide', a short internal open reading frame. During trans-translation Ala-aminoacylated tmRNA acts like a tRNA, entering the A-site of stalled ribosomes, displacing the stalled mRNA. The ribosome then switches to translate the ORF on the tmRNA; the nascent peptide is terminated with the 'tag peptide' encoded by the tmRNA and targeted for degradation. The ribosome is freed to recommence translation, which seems to be the essential function of trans-translation. In Synechococcus sp. (strain CC9902), this protein is SsrA-binding protein.